Consider the following 203-residue polypeptide: High frequency lysogenization protein HflD homolog (203 aa).

Belongs to the HflD family.

It is found in the cytoplasm. It localises to the cell inner membrane. The polypeptide is High frequency lysogenization protein HflD homolog (Vesicomyosocius okutanii subsp. Calyptogena okutanii (strain HA)).